Here is an 812-residue protein sequence, read N- to C-terminus: Probable inorganic carbon transporter subunit DabA (812 aa).

Residues Cys-338, Asp-340, His-498, and Cys-513 each contribute to the Zn(2+) site.

It belongs to the inorganic carbon transporter (TC 9.A.2) DabA family. Forms a complex with DabB. Zn(2+) serves as cofactor.

It is found in the cell inner membrane. Functionally, part of an energy-coupled inorganic carbon pump. This chain is Probable inorganic carbon transporter subunit DabA, found in Methylobacterium sp. (strain 4-46).